Reading from the N-terminus, the 89-residue chain is Antitoxin RelB (89 aa).

Belongs to the phD/YefM antitoxin family. In terms of assembly, interacts with toxin RelE, which neutralizes its toxicity. Also interacts with toxins RelG and RelK in vitro, in M.smegmatis coexpression with non-cognate toxins neutralizes the toxicity of RelG while increasing the toxicity of RelK.

Its function is as follows. Antitoxin component of a type II toxin-antitoxin (TA) system. Upon expression in M.smegmatis neutralizes the effect of toxin RelE. Functionally, induces its own promoter, in combination with RelE represses its own promoter. Binds DNA in complex with toxin RelE but not alone. The protein is Antitoxin RelB (relB) of Mycobacterium tuberculosis (strain ATCC 25618 / H37Rv).